We begin with the raw amino-acid sequence, 286 residues long: Centromere protein P (286 aa).

Residues 1-73 (MDSETRELRA…RSEHSFLSKL (73 aa)) are a coiled coil. Residue Ser-38 is modified to Phosphoserine.

The protein belongs to the CENP-P/CTF19 family. Component of the CENPA-CAD complex, composed of CENPI, CENPK, CENPL, CENPO, CENPP, CENPQ, CENPR and CENPS. The CENPA-CAD complex interacts with the CENPA-NAC complex, at least composed of CENPA, CENPC, CENPH, CENPM, CENPN, CENPT and CENPU.

Its subcellular location is the nucleus. It is found in the chromosome. The protein resides in the centromere. Functionally, component of the CENPA-CAD (nucleosome distal) complex, a complex recruited to centromeres which is involved in assembly of kinetochore proteins, mitotic progression and chromosome segregation. May be involved in incorporation of newly synthesized CENPA into centromeres via its interaction with the CENPA-NAC complex. The protein is Centromere protein P (Cenpp) of Mus musculus (Mouse).